The sequence spans 129 residues: Small ribosomal subunit protein uS11 (129 aa).

The protein belongs to the universal ribosomal protein uS11 family. As to quaternary structure, part of the 30S ribosomal subunit. Interacts with proteins S7 and S18. Binds to IF-3.

Located on the platform of the 30S subunit, it bridges several disparate RNA helices of the 16S rRNA. Forms part of the Shine-Dalgarno cleft in the 70S ribosome. The polypeptide is Small ribosomal subunit protein uS11 (Dinoroseobacter shibae (strain DSM 16493 / NCIMB 14021 / DFL 12)).